A 502-amino-acid polypeptide reads, in one-letter code: Cytochrome P450 3A40 (502 aa).

C443 contributes to the heme binding site.

This sequence belongs to the cytochrome P450 family. Requires heme as cofactor.

The protein localises to the endoplasmic reticulum membrane. The protein resides in the microsome membrane. It catalyses the reaction an organic molecule + reduced [NADPH--hemoprotein reductase] + O2 = an alcohol + oxidized [NADPH--hemoprotein reductase] + H2O + H(+). The sequence is that of Cytochrome P450 3A40 (cyp3a40) from Oryzias latipes (Japanese rice fish).